The following is a 213-amino-acid chain: Holliday junction resolvase RecU (213 aa).

Mg(2+) is bound by residues Thr99, Asp101, Glu114, and Gln133.

The protein belongs to the RecU family. The cofactor is Mg(2+).

It is found in the cytoplasm. It catalyses the reaction Endonucleolytic cleavage at a junction such as a reciprocal single-stranded crossover between two homologous DNA duplexes (Holliday junction).. Its function is as follows. Endonuclease that resolves Holliday junction intermediates in genetic recombination. Cleaves mobile four-strand junctions by introducing symmetrical nicks in paired strands. Promotes annealing of linear ssDNA with homologous dsDNA. Required for DNA repair, homologous recombination and chromosome segregation. The chain is Holliday junction resolvase RecU from Lactococcus lactis subsp. cremoris (strain SK11).